The chain runs to 273 residues: Phosphate import ATP-binding protein PstB (273 aa).

The ABC transporter domain occupies 27–268; the sequence is VTVRNLNFYY…PSDRRTQDYI (242 aa). ATP is bound at residue 59–66; the sequence is GPSGCGKS.

The protein belongs to the ABC transporter superfamily. Phosphate importer (TC 3.A.1.7) family. In terms of assembly, the complex is composed of two ATP-binding proteins (PstB), two transmembrane proteins (PstC and PstA) and a solute-binding protein (PstS).

It localises to the cell inner membrane. It catalyses the reaction phosphate(out) + ATP + H2O = ADP + 2 phosphate(in) + H(+). Its function is as follows. Part of the ABC transporter complex PstSACB involved in phosphate import. Responsible for energy coupling to the transport system. This Bradyrhizobium diazoefficiens (strain JCM 10833 / BCRC 13528 / IAM 13628 / NBRC 14792 / USDA 110) protein is Phosphate import ATP-binding protein PstB.